The following is a 386-amino-acid chain: GTPase Obg (386 aa).

The 159-residue stretch at 4–162 (SNFVDYVKIY…MTVILELKLL (159 aa)) folds into the Obg domain. Residues 18–45 (KGGRGSTHMRREKYTPNGGPDGGDGGRG) form a disordered region. The segment covering 36–45 (GPDGGDGGRG) has biased composition (gly residues). The OBG-type G domain maps to 163–329 (ADVGLVGFPN…LKDILWTELN (167 aa)). GTP is bound by residues 169–176 (GFPNAGKS), 194–198 (FTTLE), 216–219 (DIPG), 283–286 (TKSD), and 310–312 (SSV). Ser-176 and Thr-196 together coordinate Mg(2+). The tract at residues 351-386 (ELKDMGEDEELDYEYEDDGDEDDLDYEYEEEDWEDK) is disordered. The segment covering 356–386 (GEDEELDYEYEDDGDEDDLDYEYEEEDWEDK) has biased composition (acidic residues).

It belongs to the TRAFAC class OBG-HflX-like GTPase superfamily. OBG GTPase family. In terms of assembly, monomer. Mg(2+) is required as a cofactor.

It is found in the cytoplasm. An essential GTPase which binds GTP, GDP and possibly (p)ppGpp with moderate affinity, with high nucleotide exchange rates and a fairly low GTP hydrolysis rate. Plays a role in control of the cell cycle, stress response, ribosome biogenesis and in those bacteria that undergo differentiation, in morphogenesis control. In Bacteroides fragilis (strain YCH46), this protein is GTPase Obg.